A 308-amino-acid chain; its full sequence is 3'(2'),5'-bisphosphate nucleotidase 1 (308 aa).

An N-acetylalanine modification is found at alanine 2. Aspartate 51 functions as the Proton acceptor in the catalytic mechanism. Residues glutamate 74, aspartate 117, leucine 119, and aspartate 120 each contribute to the Mg(2+) site. Threonine 122 acts as the Proton acceptor in catalysis. Threonine 122 is subject to Phosphothreonine. Threonine 195, histidine 198, glycine 220, and lysine 224 together coordinate AMP. Serine 240 carries the phosphoserine modification. N6-succinyllysine is present on lysine 244. Aspartate 247 contacts Mg(2+).

This sequence belongs to the inositol monophosphatase superfamily. Mg(2+) is required as a cofactor. In terms of tissue distribution, widely expressed. Highly expressed in kidney.

It carries out the reaction adenosine 3',5'-bisphosphate + H2O = AMP + phosphate. The catalysed reaction is adenosine 2',5'-bisphosphate + H2O = AMP + phosphate. The enzyme catalyses 3'-phosphoadenylyl sulfate + H2O = adenosine 5'-phosphosulfate + phosphate. It catalyses the reaction 1D-myo-inositol 1,4-bisphosphate + H2O = 1D-myo-inositol 4-phosphate + phosphate. It carries out the reaction 1D-myo-inositol 1,3,4-trisphosphate + H2O = 1D-myo-inositol 3,4-bisphosphate + phosphate. Its activity is regulated as follows. Uncompetitively inhibited by Li(+) (IC(50)=157 uM). PAP hydrolysis is competitively inhibited by PAPS (IC(50)=0.7 uM) and by inositol 1,4-bisphosphate (IC(50)=15 uM). In terms of biological role, phosphatase that converts 3'(2')-phosphoadenosine 5'-phosphate (PAP) to AMP and adenosine 3'-phosphate 5'-phosphosulfate (PAPS) to adenosine 5'-phosphosulfate (APS). Is also able to hydrolyze inositol 1,4-bisphosphate (Ins(1,4)P2) and inositol 1,3,4-trisphosphate (Ins(1,3,4)P3), and is not active on Ins(1)P, Ins(4)P, Ins(3,4)P2, Ins(1,4,5)P3, Ins(1,3,4,5)P4, Ins(1,3,4,5,6)P5 or InsP6. Probably prevents the toxic accumulation of PAP, a compound which inhibits a variety of proteins, including PAPS-utilizing enzymes such as sulfotransferases, and RNA processing enzymes. Could also play a role in inositol recycling and phosphoinositide metabolism. The chain is 3'(2'),5'-bisphosphate nucleotidase 1 (Bpnt1) from Mus musculus (Mouse).